The following is a 270-amino-acid chain: Tryptophan synthase alpha chain (270 aa).

Residues Glu-49 and Asp-60 each act as proton acceptor in the active site.

The protein belongs to the TrpA family. In terms of assembly, tetramer of two alpha and two beta chains.

It catalyses the reaction (1S,2R)-1-C-(indol-3-yl)glycerol 3-phosphate + L-serine = D-glyceraldehyde 3-phosphate + L-tryptophan + H2O. The protein operates within amino-acid biosynthesis; L-tryptophan biosynthesis; L-tryptophan from chorismate: step 5/5. Functionally, the alpha subunit is responsible for the aldol cleavage of indoleglycerol phosphate to indole and glyceraldehyde 3-phosphate. In Marinobacter nauticus (strain ATCC 700491 / DSM 11845 / VT8) (Marinobacter aquaeolei), this protein is Tryptophan synthase alpha chain.